The sequence spans 124 residues: uncharacterized protein (124 aa).

Functionally, this protein may be involved in virus assembly. This is an uncharacterized protein from Sulfolobus spindle-shape virus 1 (SSV1).